A 126-amino-acid polypeptide reads, in one-letter code: Glycine cleavage system H protein (126 aa).

Residues 22–103 (KAYIGITDYA…PYGSWMALVE (82 aa)) enclose the Lipoyl-binding domain. At lysine 63 the chain carries N6-lipoyllysine.

Belongs to the GcvH family. As to quaternary structure, the glycine cleavage system is composed of four proteins: P, T, L and H. The cofactor is (R)-lipoate.

The glycine cleavage system catalyzes the degradation of glycine. The H protein shuttles the methylamine group of glycine from the P protein to the T protein. The sequence is that of Glycine cleavage system H protein from Thermoanaerobacter pseudethanolicus (strain ATCC 33223 / 39E) (Clostridium thermohydrosulfuricum).